A 131-amino-acid polypeptide reads, in one-letter code: Profilin-6 (131 aa).

A disulfide bond links cysteine 13 and cysteine 115. The short motif at 81–97 (AVIRGKKGAGGITIKKT) is the Involved in PIP2 interaction element. Position 111 is a phosphothreonine (threonine 111).

It belongs to the profilin family. As to quaternary structure, occurs in many kinds of cells as a complex with monomeric actin in a 1:1 ratio. Phosphorylated by MAP kinases.

The protein localises to the cytoplasm. The protein resides in the cytoskeleton. Its function is as follows. Binds to actin and affects the structure of the cytoskeleton. At high concentrations, profilin prevents the polymerization of actin, whereas it enhances it at low concentrations. The polypeptide is Profilin-6 (Phleum pratense (Common timothy)).